The chain runs to 362 residues: Aminomethyltransferase (362 aa).

The protein belongs to the GcvT family. The glycine cleavage system is composed of four proteins: P, T, L and H.

It catalyses the reaction N(6)-[(R)-S(8)-aminomethyldihydrolipoyl]-L-lysyl-[protein] + (6S)-5,6,7,8-tetrahydrofolate = N(6)-[(R)-dihydrolipoyl]-L-lysyl-[protein] + (6R)-5,10-methylene-5,6,7,8-tetrahydrofolate + NH4(+). Functionally, the glycine cleavage system catalyzes the degradation of glycine. The protein is Aminomethyltransferase of Listeria welshimeri serovar 6b (strain ATCC 35897 / DSM 20650 / CCUG 15529 / CIP 8149 / NCTC 11857 / SLCC 5334 / V8).